Here is a 484-residue protein sequence, read N- to C-terminus: Legumin type B (484 aa).

Positions 1-22 (MSKPFLSLLSLSLLLFTSTCLA) are cleaved as a signal peptide. Intrachain disulfides connect cysteine 33/cysteine 66 and cysteine 109/cysteine 310. A Cupin type-1 1 domain is found at 38 to 257 (INALEPDHRV…TFNTEEDTAK (220 aa)). 3 disordered regions span residues 109-141 (CPQT…RFRK), 196-236 (PETQ…GNSV), and 275-304 (GLRI…GRNG). Residues 117–129 (RSSQSRQGSRQQQ) are compositionally biased toward low complexity. Residues 284–293 (QQEEEEEEEE) show a composition bias toward acidic residues. In terms of domain architecture, Cupin type-1 2 spans 316–463 (ENIAQPARAD…AFGLRQRQVT (148 aa)).

It belongs to the 11S seed storage protein (globulins) family. As to quaternary structure, hexamer; each subunit is composed of an acidic and a basic chain derived from a single precursor and linked by a disulfide bond.

In terms of biological role, this protein found in the seeds of many leguminous and non-leguminous plants is the source of sulfur-containing amino acids in seed meals. The protein is Legumin type B (LEB4) of Vicia faba (Broad bean).